The sequence spans 396 residues: Beta-1,4-galactosyltransferase 3 (396 aa).

The Cytoplasmic portion of the chain corresponds to 1–10; it reads MLRRLLERPC. The helical; Signal-anchor for type II membrane protein transmembrane segment at 11–31 threads the bilayer; sequence TLALLVGSQLAVMMYLSLGGF. At 32-396 the chain is on the lumenal side; that stretch reads RSLSALFGRE…ANHTAPHGSH (365 aa). N-linked (GlcNAc...) asparagine glycosylation occurs at N57. C80 and C122 are joined by a disulfide. Residue 133 to 137 coordinates UDP-alpha-D-galactose; it reads PHRAR. N169 carries N-linked (GlcNAc...) asparagine glycosylation. UDP-alpha-D-galactose is bound by residues 172–174, 199–200, Y229, and W261; these read FNR and VD. C193 and C212 are joined by a disulfide. Position 200 (D200) interacts with Mn(2+). Position 263–266 (263–266) interacts with N-acetyl-D-glucosamine; the sequence is GEDD. Residue H294 participates in Mn(2+) binding. 294-296 contributes to the UDP-alpha-D-galactose binding site; that stretch reads HRG. An N-acetyl-D-glucosamine-binding site is contributed by R306. N-linked (GlcNAc...) asparagine glycosylation occurs at N340. Residues 341-396 are disordered; the sequence is ITADIGTDPRGPRTSSGPHYPPGSSQAFRQEMLQRRPPARPGPLPTANHTAPHGSH. A compositionally biased stretch (polar residues) spans 353–368; sequence RTSSGPHYPPGSSQAF. The N-linked (GlcNAc...) asparagine glycan is linked to N388.

It belongs to the glycosyltransferase 7 family. The cofactor is Mn(2+).

It localises to the golgi apparatus. Its subcellular location is the golgi stack membrane. The enzyme catalyses an N-acetyl-beta-D-glucosaminyl derivative + UDP-alpha-D-galactose = a beta-D-galactosyl-(1-&gt;4)-N-acetyl-beta-D-glucosaminyl derivative + UDP + H(+). The catalysed reaction is N-acetyl-D-glucosamine + UDP-alpha-D-galactose = beta-D-galactosyl-(1-&gt;4)-N-acetyl-D-glucosamine + UDP + H(+). It catalyses the reaction a beta-D-GlcNAc-(1-&gt;3)-beta-D-Gal-(1-&gt;4)-beta-D-Glc-(1&lt;-&gt;1)-Cer(d18:1(4E)) + UDP-alpha-D-galactose = a neolactoside nLc4Cer(d18:1(4E)) + UDP + H(+). It carries out the reaction a beta-D-glucosylceramide + UDP-alpha-D-galactose = a beta-D-galactosyl-(1-&gt;4)-beta-D-glucosyl-(1&lt;-&gt;1)-ceramide + UDP + H(+). The enzyme catalyses a neolactoside IV(3)-beta-GlcNAc-nLc4Cer + UDP-alpha-D-galactose = a neolactoside nLc6Cer + UDP + H(+). The protein operates within protein modification; protein glycosylation. Functionally, responsible for the synthesis of complex-type N-linked oligosaccharides in many glycoproteins as well as the carbohydrate moieties of glycolipids. The protein is Beta-1,4-galactosyltransferase 3 (B4GALT3) of Bos taurus (Bovine).